We begin with the raw amino-acid sequence, 1068 residues long: Ubiquitin-protein ligase E3B (1068 aa).

An N-acetylmethionine modification is found at Met1. Residues 29–58 (RERAAVVIQAHVRSFLCRSRLQRDIRREID) enclose the IQ domain. Position 419 is a phosphoserine (Ser419). The region spanning 702–1068 (SQHAMKGVIR…ISMNTGFELS (367 aa)) is the HECT domain. Cys1036 (glycyl thioester intermediate) is an active-site residue.

In terms of tissue distribution, widely expressed.

Its subcellular location is the postsynaptic density. It carries out the reaction S-ubiquitinyl-[E2 ubiquitin-conjugating enzyme]-L-cysteine + [acceptor protein]-L-lysine = [E2 ubiquitin-conjugating enzyme]-L-cysteine + N(6)-ubiquitinyl-[acceptor protein]-L-lysine.. It participates in protein modification; protein ubiquitination. Its function is as follows. E3 ubiquitin-protein ligase which accepts ubiquitin from an E2 ubiquitin-conjugating enzyme in the form of a thioester and then directly transfers the ubiquitin to targeted substrates. Ubiquitinates BCKDK and targets it for degradation, thereby regulating various metabolic processes. Involved in the positive regulation of neurite branching in hippocampal neurons and the control of neuronal spine number and morphology, through the ubiquitination of PPP3CC. This chain is Ubiquitin-protein ligase E3B (UBE3B), found in Homo sapiens (Human).